The primary structure comprises 268 residues: Orotidine 5'-phosphate decarboxylase (268 aa).

Substrate is bound by residues aspartate 39, 61–63 (KTH), 93–102 (DRKFADIGNT), tyrosine 219, and arginine 237. Lysine 95 functions as the Proton donor in the catalytic mechanism.

The protein belongs to the OMP decarboxylase family.

The catalysed reaction is orotidine 5'-phosphate + H(+) = UMP + CO2. Its pathway is pyrimidine metabolism; UMP biosynthesis via de novo pathway; UMP from orotate: step 2/2. This is Orotidine 5'-phosphate decarboxylase (URA3) from Pachysolen tannophilus (Yeast).